Here is a 477-residue protein sequence, read N- to C-terminus: ETS translocation variant 1 (477 aa).

Ser-94 carries the phosphoserine modification. A disordered region spans residues 128–178 (PQVGMRPSNPPTPSSTPVSPLHHASPNSAHTSKPDRAFPAHLPPSQPIQDS). Residues Ser-191 and Ser-216 each carry the phosphoserine; by RPS6KA1 and RPS6KA5 modification. Lys-317 participates in a covalent cross-link: Glycyl lysine isopeptide (Lys-Gly) (interchain with G-Cter in SUMO2). The ETS DNA-binding region spans 335–415 (LQLWQFLVAL…AGERYVYKFV (81 aa)).

The protein belongs to the ETS family. Sumoylated. Post-translationally, phosphorylated at Ser-191 and Ser-216 by RPS6KA1 and RPS6KA5; phosphorylation activates transcriptional activity.

Its subcellular location is the nucleus. Transcriptional activator that binds to DNA sequences containing the consensus pentanucleotide 5'-CGGA[AT]-3'. Required for olfactory dopaminergic neuron differentiation; may directly activate expression of tyrosine hydroxylase (TH). The polypeptide is ETS translocation variant 1 (ETV1) (Bos taurus (Bovine)).